Reading from the N-terminus, the 365-residue chain is Alanine racemase (365 aa).

The active-site Proton acceptor; specific for D-alanine is lysine 35. The residue at position 35 (lysine 35) is an N6-(pyridoxal phosphate)lysine. Substrate is bound at residue arginine 130. Catalysis depends on tyrosine 256, which acts as the Proton acceptor; specific for L-alanine. Residue methionine 304 participates in substrate binding.

This sequence belongs to the alanine racemase family. Requires pyridoxal 5'-phosphate as cofactor.

The catalysed reaction is L-alanine = D-alanine. Its pathway is amino-acid biosynthesis; D-alanine biosynthesis; D-alanine from L-alanine: step 1/1. In terms of biological role, catalyzes the interconversion of L-alanine and D-alanine. May also act on other amino acids. The chain is Alanine racemase (alr) from Acidovorax ebreus (strain TPSY) (Diaphorobacter sp. (strain TPSY)).